The sequence spans 287 residues: 4-hydroxybenzoate octaprenyltransferase (287 aa).

A run of 7 helical transmembrane segments spans residues 30 to 50 (ALWI…FALG), 92 to 112 (IAIA…LNGL), 133 to 153 (FFAI…PMAF), 158 to 178 (DTVP…SVAY), 207 to 227 (VLAI…LGAA), 232 to 252 (WPYW…YTLI), and 266 to 286 (HNNW…ALAV).

This sequence belongs to the UbiA prenyltransferase family. It depends on Mg(2+) as a cofactor.

Its subcellular location is the cell inner membrane. The catalysed reaction is all-trans-octaprenyl diphosphate + 4-hydroxybenzoate = 4-hydroxy-3-(all-trans-octaprenyl)benzoate + diphosphate. The protein operates within cofactor biosynthesis; ubiquinone biosynthesis. Catalyzes the prenylation of para-hydroxybenzoate (PHB) with an all-trans polyprenyl group. Mediates the second step in the final reaction sequence of ubiquinone-8 (UQ-8) biosynthesis, which is the condensation of the polyisoprenoid side chain with PHB, generating the first membrane-bound Q intermediate 3-octaprenyl-4-hydroxybenzoate. This Burkholderia pseudomallei (strain 1106a) protein is 4-hydroxybenzoate octaprenyltransferase.